We begin with the raw amino-acid sequence, 297 residues long: Formamidopyrimidine-DNA glycosylase (297 aa).

Proline 2 (schiff-base intermediate with DNA) is an active-site residue. Residue glutamate 3 is the Proton donor of the active site. The Proton donor; for beta-elimination activity role is filled by lysine 58. Histidine 104, arginine 127, and lysine 170 together coordinate DNA. The FPG-type zinc-finger motif lies at 261-297 (SVYDREGKPCRKEGCSGTIQRFVQGGRSTFYCPICQR). The active-site Proton donor; for delta-elimination activity is arginine 287.

Belongs to the FPG family. As to quaternary structure, monomer. Requires Zn(2+) as cofactor.

It catalyses the reaction Hydrolysis of DNA containing ring-opened 7-methylguanine residues, releasing 2,6-diamino-4-hydroxy-5-(N-methyl)formamidopyrimidine.. The enzyme catalyses 2'-deoxyribonucleotide-(2'-deoxyribose 5'-phosphate)-2'-deoxyribonucleotide-DNA = a 3'-end 2'-deoxyribonucleotide-(2,3-dehydro-2,3-deoxyribose 5'-phosphate)-DNA + a 5'-end 5'-phospho-2'-deoxyribonucleoside-DNA + H(+). Involved in base excision repair of DNA damaged by oxidation or by mutagenic agents. Acts as a DNA glycosylase that recognizes and removes damaged bases. Has a preference for oxidized purines, such as 7,8-dihydro-8-oxoguanine (8-oxoG). Has AP (apurinic/apyrimidinic) lyase activity and introduces nicks in the DNA strand. Cleaves the DNA backbone by beta-delta elimination to generate a single-strand break at the site of the removed base with both 3'- and 5'-phosphates. The sequence is that of Formamidopyrimidine-DNA glycosylase from Chelativorans sp. (strain BNC1).